The primary structure comprises 652 residues: Bifunctional protein ThiO/ThiG (652 aa).

Residues 1-366 form a thiO region; sequence MTRDIVIIGG…HYSRFQKQAS (366 aa). Residues 5-19 and 44-46 each bind FAD; these read IVII…AIAV and AGM. Glu52 lines the glycine pocket. Val173 contributes to the FAD binding site. 2 residues coordinate glycine: Arg301 and Arg327. 325-331 contributes to the FAD binding site; it reads HYRNGIL. A thiG region spans residues 393 to 652; sequence SLIIAGKSFH…ASSPVTGTIS (260 aa). Residue Lys494 is the Schiff-base intermediate with DXP of the active site. 1-deoxy-D-xylulose 5-phosphate contacts are provided by residues Gly555, 581-582, and 603-604; these read AG and NS.

This sequence in the N-terminal section; belongs to the DAO family. ThiO subfamily. In the C-terminal section; belongs to the ThiG family. In terms of assembly, interacts with ThiH and ThiS. It depends on FAD as a cofactor.

The protein resides in the cytoplasm. It catalyses the reaction glycine + O2 + H2O = glyoxylate + H2O2 + NH4(+). The catalysed reaction is [ThiS sulfur-carrier protein]-C-terminal-Gly-aminoethanethioate + 2-iminoacetate + 1-deoxy-D-xylulose 5-phosphate = [ThiS sulfur-carrier protein]-C-terminal Gly-Gly + 2-[(2R,5Z)-2-carboxy-4-methylthiazol-5(2H)-ylidene]ethyl phosphate + 2 H2O + H(+). The protein operates within cofactor biosynthesis; thiamine diphosphate biosynthesis. In terms of biological role, catalyzes the FAD-dependent oxidative deamination of glycine. Is essential for thiamine biosynthesis since the oxidation of glycine catalyzed by ThiO generates the glycine imine intermediate (dehydroglycine) required for the biosynthesis of the thiazole ring of thiamine pyrophosphate. Catalyzes the rearrangement of 1-deoxy-D-xylulose 5-phosphate (DXP) to produce the thiazole phosphate moiety of thiamine. Sulfur is provided by the thiocarboxylate moiety of the carrier protein ThiS. In vitro, sulfur can be provided by H(2)S. The protein is Bifunctional protein ThiO/ThiG (thiO/thiG) of Trichormus variabilis (strain ATCC 29413 / PCC 7937) (Anabaena variabilis).